The primary structure comprises 245 residues: 1-(5-phosphoribosyl)-5-[(5-phosphoribosylamino)methylideneamino] imidazole-4-carboxamide isomerase (245 aa).

Asp7 (proton acceptor) is an active-site residue. Asp129 (proton donor) is an active-site residue.

It belongs to the HisA/HisF family.

The protein resides in the cytoplasm. The catalysed reaction is 1-(5-phospho-beta-D-ribosyl)-5-[(5-phospho-beta-D-ribosylamino)methylideneamino]imidazole-4-carboxamide = 5-[(5-phospho-1-deoxy-D-ribulos-1-ylimino)methylamino]-1-(5-phospho-beta-D-ribosyl)imidazole-4-carboxamide. It functions in the pathway amino-acid biosynthesis; L-histidine biosynthesis; L-histidine from 5-phospho-alpha-D-ribose 1-diphosphate: step 4/9. This is 1-(5-phosphoribosyl)-5-[(5-phosphoribosylamino)methylideneamino] imidazole-4-carboxamide isomerase from Salmonella enteritidis PT4 (strain P125109).